Reading from the N-terminus, the 353-residue chain is Heterogeneous nuclear ribonucleoprotein D0 (353 aa).

The tract at residues 1–89 (MSEEQFGGDG…SSPRHTEAAT (89 aa)) is disordered. At Ser2 the chain carries N-acetylserine. Over residues 11-42 (AAAAATAAVGGSAGEQEGAMVAAAQGAAAAAG) the composition is skewed to low complexity. Residues 43–56 (SGSGGGSAPGGTEG) are compositionally biased toward gly residues. Positions 62–71 (EGAKIDASKN) are enriched in basic and acidic residues. Residue Ser69 is modified to Phosphoserine. Lys70 participates in a covalent cross-link: Glycyl lysine isopeptide (Lys-Gly) (interchain with G-Cter in SUMO2). A phosphoserine mark is found at Ser78, Ser80, and Ser81. Thr89 is modified (phosphothreonine). RRM domains lie at 95–177 (WKMF…KTKE) and 180–259 (KKIF…MSKE). Position 117 is an N6-methyllysine (Lys117). Thr125 bears the Phosphothreonine mark. Residue Lys127 forms a Glycyl lysine isopeptide (Lys-Gly) (interchain with G-Cter in SUMO2) linkage. Lys163 carries the N6-acetyllysine modification. A Phosphoserine modification is found at Ser188. Residue Thr191 is modified to Phosphothreonine. Lys195 participates in a covalent cross-link: Glycyl lysine isopeptide (Lys-Gly) (interchain with G-Cter in SUMO2). N6-acetyllysine is present on residues Lys241 and Lys249. The residue at position 269 (Ser269) is a Phosphoserine. Residues Arg270, Arg276, Arg278, and Arg280 each carry the omega-N-methylarginine modification. Arg343 is modified (asymmetric dimethylarginine; alternate). Residue Arg343 is modified to Dimethylated arginine; alternate. Position 343 is an omega-N-methylarginine; alternate (Arg343).

Identified in a IGF2BP1-dependent mRNP granule complex containing untranslated mRNAs. Part of a complex associated with the FOS mCRD domain and consisting of PABPC1, PAIP1, CSDE1/UNR and SYNCRIP. Interacts with IGF2BP2. Interacts with GTPBP1. Interacts with EIF4G1; the interaction requires RNA. Interacts with EIF3B and RPS3. Post-translationally, methylated by PRMT1, in an insulin-dependent manner. The PRMT1-mediated methylation regulates its phosphorylation. Arg-343 is dimethylated, probably to asymmetric dimethylarginine.

It localises to the nucleus. Its subcellular location is the cytoplasm. Binds with high affinity to RNA molecules that contain AU-rich elements (AREs) found within the 3'-UTR of many proto-oncogenes and cytokine mRNAs. Also binds to double- and single-stranded DNA sequences in a specific manner and functions a transcription factor. Each of the RNA-binding domains specifically can bind solely to a single-stranded non-monotonous 5'-UUAG-3' sequence and also weaker to the single-stranded 5'-TTAGGG-3' telomeric DNA repeat. Binds RNA oligonucleotides with 5'-UUAGGG-3' repeats more tightly than the telomeric single-stranded DNA 5'-TTAGGG-3' repeats. Binding of RRM1 to DNA inhibits the formation of DNA quadruplex structure which may play a role in telomere elongation. May be involved in translationally coupled mRNA turnover. Implicated with other RNA-binding proteins in the cytoplasmic deadenylation/translational and decay interplay of the FOS mRNA mediated by the major coding-region determinant of instability (mCRD) domain. May play a role in the regulation of the rhythmic expression of circadian clock core genes. Directly binds to the 3'UTR of CRY1 mRNA and induces CRY1 rhythmic translation. May also be involved in the regulation of PER2 translation. This chain is Heterogeneous nuclear ribonucleoprotein D0 (Hnrnpd), found in Rattus norvegicus (Rat).